We begin with the raw amino-acid sequence, 340 residues long: Ribosomal RNA small subunit methyltransferase C (340 aa).

This sequence belongs to the methyltransferase superfamily. RsmC family. As to quaternary structure, monomer.

The protein resides in the cytoplasm. The catalysed reaction is guanosine(1207) in 16S rRNA + S-adenosyl-L-methionine = N(2)-methylguanosine(1207) in 16S rRNA + S-adenosyl-L-homocysteine + H(+). Its function is as follows. Specifically methylates the guanine in position 1207 of 16S rRNA in the 30S particle. The polypeptide is Ribosomal RNA small subunit methyltransferase C (Vibrio vulnificus (strain CMCP6)).